Here is a 216-residue protein sequence, read N- to C-terminus: Orotate phosphoribosyltransferase (216 aa).

Lys-30 lines the 5-phospho-alpha-D-ribose 1-diphosphate pocket. Residue 38-39 (FF) participates in orotate binding. 5-phospho-alpha-D-ribose 1-diphosphate-binding positions include 75–76 (YK), Arg-102, Lys-103, Lys-106, His-108, and 128–136 (DDVITAGTA). Thr-132 and Arg-160 together coordinate orotate.

The protein belongs to the purine/pyrimidine phosphoribosyltransferase family. PyrE subfamily. Homodimer. Requires Mg(2+) as cofactor.

It catalyses the reaction orotidine 5'-phosphate + diphosphate = orotate + 5-phospho-alpha-D-ribose 1-diphosphate. It functions in the pathway pyrimidine metabolism; UMP biosynthesis via de novo pathway; UMP from orotate: step 1/2. Its function is as follows. Catalyzes the transfer of a ribosyl phosphate group from 5-phosphoribose 1-diphosphate to orotate, leading to the formation of orotidine monophosphate (OMP). The protein is Orotate phosphoribosyltransferase of Acinetobacter baylyi (strain ATCC 33305 / BD413 / ADP1).